A 436-amino-acid polypeptide reads, in one-letter code: UPF0597 protein YhaM (436 aa).

The protein belongs to the UPF0597 family.

This Salmonella paratyphi C (strain RKS4594) protein is UPF0597 protein YhaM.